Here is a 93-residue protein sequence, read N- to C-terminus: Acylphosphatase (93 aa).

The Acylphosphatase-like domain maps to Thr-4–Ala-91. Catalysis depends on residues Arg-19 and Asn-37.

Belongs to the acylphosphatase family.

The enzyme catalyses an acyl phosphate + H2O = a carboxylate + phosphate + H(+). This Azorhizobium caulinodans (strain ATCC 43989 / DSM 5975 / JCM 20966 / LMG 6465 / NBRC 14845 / NCIMB 13405 / ORS 571) protein is Acylphosphatase (acyP).